The following is a 282-amino-acid chain: 4-diphosphocytidyl-2-C-methyl-D-erythritol kinase (282 aa).

The active site involves Lys-12. ATP is bound at residue 95–105 (PMGGGIGGGSS). Asp-137 is an active-site residue.

The protein belongs to the GHMP kinase family. IspE subfamily.

It catalyses the reaction 4-CDP-2-C-methyl-D-erythritol + ATP = 4-CDP-2-C-methyl-D-erythritol 2-phosphate + ADP + H(+). It functions in the pathway isoprenoid biosynthesis; isopentenyl diphosphate biosynthesis via DXP pathway; isopentenyl diphosphate from 1-deoxy-D-xylulose 5-phosphate: step 3/6. In terms of biological role, catalyzes the phosphorylation of the position 2 hydroxy group of 4-diphosphocytidyl-2C-methyl-D-erythritol. The protein is 4-diphosphocytidyl-2-C-methyl-D-erythritol kinase of Pseudomonas aeruginosa (strain ATCC 15692 / DSM 22644 / CIP 104116 / JCM 14847 / LMG 12228 / 1C / PRS 101 / PAO1).